The chain runs to 95 residues: UPF0358 protein BCG9842_B1188 (95 aa).

This sequence belongs to the UPF0358 family.

This chain is UPF0358 protein BCG9842_B1188, found in Bacillus cereus (strain G9842).